A 219-amino-acid polypeptide reads, in one-letter code: MKEIIDGFLKFQREAFPKREALFKQLATQQSPRTLFISCSDSRLVPELVTQREPGDLFVIRNAGNIVPSYGPEPGGVSASVEYAVAALRVSDIVICGHSNCGAMTAIASCQCMDHMPAVSHWLRYADSARVVNEARPHSDLPSKAAAMVRENVIAQLANLQTHPSVRLALEEGRIALHGWVYDIESGSIAAFDGATRQFVPLAANPRVCAIPLRQPTAA.

4 residues coordinate Zn(2+): C39, D41, H98, and C101.

This sequence belongs to the beta-class carbonic anhydrase family. As to quaternary structure, oligomer. The cofactor is Zn(2+).

It catalyses the reaction hydrogencarbonate + H(+) = CO2 + H2O. In terms of biological role, reversible hydration of carbon dioxide. Carbon dioxide formed in the bicarbonate-dependent decomposition of cyanate by cyanase (CynS) diffuses out of the cell faster than it would be hydrated to bicarbonate, so the apparent function of this enzyme is to catalyze the hydration of carbon dioxide and thus prevent depletion of cellular bicarbonate. This Escherichia coli O157:H7 protein is Carbonic anhydrase 1 (cynT).